Reading from the N-terminus, the 218-residue chain is uncharacterized protein (218 aa).

2 helical membrane-spanning segments follow: residues 8-28 (LAVF…ATAG) and 158-178 (ILFY…FLLI).

The protein resides in the cell membrane. This is an uncharacterized protein from Mycoplasma genitalium (strain ATCC 33530 / DSM 19775 / NCTC 10195 / G37) (Mycoplasmoides genitalium).